The following is a 598-amino-acid chain: Glutamyl-tRNA(Gln) amidotransferase subunit E (598 aa).

Belongs to the GatB/GatE family. GatE subfamily. In terms of assembly, heterodimer of GatD and GatE.

It carries out the reaction L-glutamyl-tRNA(Gln) + L-glutamine + ATP + H2O = L-glutaminyl-tRNA(Gln) + L-glutamate + ADP + phosphate + H(+). In terms of biological role, allows the formation of correctly charged Gln-tRNA(Gln) through the transamidation of misacylated Glu-tRNA(Gln) in organisms which lack glutaminyl-tRNA synthetase. The reaction takes place in the presence of glutamine and ATP through an activated gamma-phospho-Glu-tRNA(Gln). The GatDE system is specific for glutamate and does not act on aspartate. The chain is Glutamyl-tRNA(Gln) amidotransferase subunit E from Thermoplasma volcanium (strain ATCC 51530 / DSM 4299 / JCM 9571 / NBRC 15438 / GSS1).